A 497-amino-acid chain; its full sequence is Bifunctional protein GlmU (497 aa).

Positions 1 to 241 are pyrophosphorylase; the sequence is MSPETIGPAA…RWQVEGANDR (241 aa). UDP-N-acetyl-alpha-D-glucosamine-binding positions include 14-17, K28, Q81, 86-87, 112-114, G151, E166, N181, and N239; these read LAAG, GT, and YGD. Position 114 (D114) interacts with Mg(2+). N239 serves as a coordination point for Mg(2+). Positions 242 to 262 are linker; sequence IQLSALAAEHNRRIIESWMRA. Residues 263-497 are N-acetyltransferase; sequence GVTVVDPATT…QATIEEGKQA (235 aa). Residues R344 and K362 each coordinate UDP-N-acetyl-alpha-D-glucosamine. The Proton acceptor role is filled by H374. 2 residues coordinate UDP-N-acetyl-alpha-D-glucosamine: Y377 and N388. Acetyl-CoA is bound by residues 397 to 398, S416, and A434; that span reads NY.

This sequence in the N-terminal section; belongs to the N-acetylglucosamine-1-phosphate uridyltransferase family. The protein in the C-terminal section; belongs to the transferase hexapeptide repeat family. As to quaternary structure, homotrimer. Requires Mg(2+) as cofactor.

It localises to the cytoplasm. The catalysed reaction is alpha-D-glucosamine 1-phosphate + acetyl-CoA = N-acetyl-alpha-D-glucosamine 1-phosphate + CoA + H(+). It carries out the reaction N-acetyl-alpha-D-glucosamine 1-phosphate + UTP + H(+) = UDP-N-acetyl-alpha-D-glucosamine + diphosphate. It participates in nucleotide-sugar biosynthesis; UDP-N-acetyl-alpha-D-glucosamine biosynthesis; N-acetyl-alpha-D-glucosamine 1-phosphate from alpha-D-glucosamine 6-phosphate (route II): step 2/2. It functions in the pathway nucleotide-sugar biosynthesis; UDP-N-acetyl-alpha-D-glucosamine biosynthesis; UDP-N-acetyl-alpha-D-glucosamine from N-acetyl-alpha-D-glucosamine 1-phosphate: step 1/1. The protein operates within bacterial outer membrane biogenesis; LPS lipid A biosynthesis. Catalyzes the last two sequential reactions in the de novo biosynthetic pathway for UDP-N-acetylglucosamine (UDP-GlcNAc). The C-terminal domain catalyzes the transfer of acetyl group from acetyl coenzyme A to glucosamine-1-phosphate (GlcN-1-P) to produce N-acetylglucosamine-1-phosphate (GlcNAc-1-P), which is converted into UDP-GlcNAc by the transfer of uridine 5-monophosphate (from uridine 5-triphosphate), a reaction catalyzed by the N-terminal domain. This is Bifunctional protein GlmU from Paenarthrobacter aurescens (strain TC1).